A 130-amino-acid chain; its full sequence is Immunoglobulin kappa chain variable 9-120 (130 aa).

Positions 1-22 (MDMRAPAQIFGFLLLLFQGTRC) are cleaved as a signal peptide. Positions 23-45 (DIQMTQSPSSLSASLGERVSLTC) are framework-1. A disulfide bond links cysteine 45 and cysteine 110. The tract at residues 46–56 (RASQDIGSSLN) is complementarity-determining-1. The segment at 57–71 (WLQQEPDGTIKRLIY) is framework-2. The segment at 72 to 78 (ATSSLDS) is complementarity-determining-2. Residues 79–110 (GVPKRFSGSRSGSDYSLTISSLESEDFVDYYC) form a framework-3 region. The complementarity-determining-3 stretch occupies residues 111–119 (LQYASSPWT). Positions 120 to 129 (FGGGTKLEIK) are framework-4.

This chain is Immunoglobulin kappa chain variable 9-120, found in Mus musculus (Mouse).